The primary structure comprises 655 residues: p-hydroxybenzoic acid efflux pump subunit AaeB (655 aa).

A run of 11 helical transmembrane segments spans residues 13–33 (FAVKLASAIVLALFVGFHFQL), 38–58 (WAVLTAAIVAAGPAFAAGGEP), 69–89 (LRIIGTFIGCIAALTIIILMI), 93–113 (LLMVLVCCIWAGFCTWLSSLV), 121–141 (WGLAGYTALIIVITIQTEPLL), 152–172 (EIVIGIVCAIVADLLFSPRSI), 370–390 (LFWLWTGWTSGSGAMVMIAVV), 407–427 (FLYGTIAALPLGALYFLVILP), 431–451 (QSMLLLCISLAVMAFFIGIEV), 459–479 (LGALASTINILVLDNPMTFHF), and 482–502 (FLDSALGQLVGCFLAMMVILL).

Belongs to the aromatic acid exporter ArAE (TC 2.A.85) family.

The protein resides in the cell inner membrane. Its function is as follows. Forms an efflux pump with AaeA. Could function as a metabolic relief valve, allowing to eliminate certain compounds when they accumulate to high levels in the cell. The protein is p-hydroxybenzoic acid efflux pump subunit AaeB of Enterobacter cloacae subsp. cloacae (strain ATCC 13047 / DSM 30054 / NBRC 13535 / NCTC 10005 / WDCM 00083 / NCDC 279-56).